The primary structure comprises 252 residues: 3-deoxy-manno-octulosonate cytidylyltransferase (252 aa).

The protein belongs to the KdsB family.

The protein resides in the cytoplasm. It carries out the reaction 3-deoxy-alpha-D-manno-oct-2-ulosonate + CTP = CMP-3-deoxy-beta-D-manno-octulosonate + diphosphate. It participates in nucleotide-sugar biosynthesis; CMP-3-deoxy-D-manno-octulosonate biosynthesis; CMP-3-deoxy-D-manno-octulosonate from 3-deoxy-D-manno-octulosonate and CTP: step 1/1. It functions in the pathway bacterial outer membrane biogenesis; lipopolysaccharide biosynthesis. Activates KDO (a required 8-carbon sugar) for incorporation into bacterial lipopolysaccharide in Gram-negative bacteria. This is 3-deoxy-manno-octulosonate cytidylyltransferase from Nitratidesulfovibrio vulgaris (strain DP4) (Desulfovibrio vulgaris).